Consider the following 327-residue polypeptide: Methionyl-tRNA formyltransferase (327 aa).

122 to 125 (SLLP) serves as a coordination point for (6S)-5,6,7,8-tetrahydrofolate.

It belongs to the Fmt family.

The enzyme catalyses L-methionyl-tRNA(fMet) + (6R)-10-formyltetrahydrofolate = N-formyl-L-methionyl-tRNA(fMet) + (6S)-5,6,7,8-tetrahydrofolate + H(+). Its function is as follows. Attaches a formyl group to the free amino group of methionyl-tRNA(fMet). The formyl group appears to play a dual role in the initiator identity of N-formylmethionyl-tRNA by promoting its recognition by IF2 and preventing the misappropriation of this tRNA by the elongation apparatus. The polypeptide is Methionyl-tRNA formyltransferase (Ralstonia nicotianae (strain ATCC BAA-1114 / GMI1000) (Ralstonia solanacearum)).